The chain runs to 294 residues: 33 kDa chaperonin (294 aa).

Disulfide bonds link Cys-238-Cys-240 and Cys-271-Cys-274.

This sequence belongs to the HSP33 family. In terms of processing, under oxidizing conditions two disulfide bonds are formed involving the reactive cysteines. Under reducing conditions zinc is bound to the reactive cysteines and the protein is inactive.

Its subcellular location is the cytoplasm. In terms of biological role, redox regulated molecular chaperone. Protects both thermally unfolding and oxidatively damaged proteins from irreversible aggregation. Plays an important role in the bacterial defense system toward oxidative stress. The chain is 33 kDa chaperonin from Caldanaerobacter subterraneus subsp. tengcongensis (strain DSM 15242 / JCM 11007 / NBRC 100824 / MB4) (Thermoanaerobacter tengcongensis).